We begin with the raw amino-acid sequence, 196 residues long: HTH-type transcriptional regulator BetI (196 aa).

Residues 8 to 68 (PIRRSQLIAA…ATMRHLMQAL (61 aa)) form the HTH tetR-type domain. The H-T-H motif DNA-binding region spans 31–50 (SIAYIARLAGVSNGIISHYF).

Its pathway is amine and polyamine biosynthesis; betaine biosynthesis via choline pathway [regulation]. In terms of biological role, repressor involved in the biosynthesis of the osmoprotectant glycine betaine. It represses transcription of the choline transporter BetT and the genes of BetAB involved in the synthesis of glycine betaine. The chain is HTH-type transcriptional regulator BetI from Ectopseudomonas mendocina (strain ymp) (Pseudomonas mendocina).